The primary structure comprises 334 residues: Ribosomal RNA small subunit methyltransferase H (334 aa).

Residues 53-55, aspartate 72, phenylalanine 99, aspartate 122, and histidine 129 contribute to the S-adenosyl-L-methionine site; that span reads GGH.

Belongs to the methyltransferase superfamily. RsmH family.

It is found in the cytoplasm. The catalysed reaction is cytidine(1402) in 16S rRNA + S-adenosyl-L-methionine = N(4)-methylcytidine(1402) in 16S rRNA + S-adenosyl-L-homocysteine + H(+). Functionally, specifically methylates the N4 position of cytidine in position 1402 (C1402) of 16S rRNA. The polypeptide is Ribosomal RNA small subunit methyltransferase H (Leptospira interrogans serogroup Icterohaemorrhagiae serovar Lai (strain 56601)).